We begin with the raw amino-acid sequence, 531 residues long: Polyamine transporter PUT1 (531 aa).

The interval 1–76 (MADTGGRPEV…LPDGDAGGPM (76 aa)) is disordered. A compositionally biased stretch (low complexity) spans 17-33 (SPGHPAASTTAAAAADL). Residues 34–44 (GHADTGQEKPT) show a composition bias toward basic and acidic residues. The next 12 helical transmembrane spans lie at 83–103 (VSMIPLIFLIFYEVSGGPFGI), 113–133 (LLAIIGFLVLPVIWSIPEALI), 147–167 (YVVWVASALGPYWGFQQGWMK), 193–213 (LGGGAPRAFAVVGLTAVLTLL), 224–244 (VAICLGVFSLLPFFVMGLIAL), 262–284 (WNLYLNTLFWNLNYWDSISTLAG), 296–316 (ALFYAVIFVVVAYLYPLLAGT), 341–361 (AWLMWWVQSAAALSNMGMFVA), 391–411 (TPLAGILFSASGVLLLSMMSF), 414–434 (IVAAENFLYCFGMLLEFVAFI), 453–473 (TAGCVAMLVPPTALIAVVLAL), and 476–496 (LKVAVVSLGAVAMGLVLQPAL).

This sequence belongs to the amino acid-polyamine-organocation (APC) superfamily. Polyamine:cation symporter (PHS) (TC 2.A.3.12) family. As to expression, expressed in seedling roots, leaves, stems, flowers and siliques.

The protein resides in the cell membrane. Its function is as follows. Cell membrane polyamine/proton symporter involved in the polyamine uptake in cells. Possesses high affinity for spermidine and lower affinity for spermine and putrescine. Transports paraquat, a polyamine analog, and thus confers sensitivity to this chemical which is used as a herbicide. In Oryza sativa subsp. japonica (Rice), this protein is Polyamine transporter PUT1 (PUT1).